A 170-amino-acid chain; its full sequence is Ribosome maturation factor RimM (170 aa).

The PRC barrel domain maps to 96 to 169; the sequence is EGEFYACDVE…VVQLATLEGL (74 aa).

The protein belongs to the RimM family. In terms of assembly, binds ribosomal protein uS19.

The protein localises to the cytoplasm. Functionally, an accessory protein needed during the final step in the assembly of 30S ribosomal subunit, possibly for assembly of the head region. Essential for efficient processing of 16S rRNA. May be needed both before and after RbfA during the maturation of 16S rRNA. It has affinity for free ribosomal 30S subunits but not for 70S ribosomes. The chain is Ribosome maturation factor RimM from Sorangium cellulosum (strain So ce56) (Polyangium cellulosum (strain So ce56)).